The primary structure comprises 692 residues: Elongation factor G (692 aa).

In terms of domain architecture, tr-type G spans Glu8–Thr282. GTP is bound by residues Ala17–Thr24, Asp81–His85, and Asn135–Asp138. Residues Pro285–Asp304 form a disordered region. Over residues Val290 to Asp304 the composition is skewed to basic and acidic residues.

It belongs to the TRAFAC class translation factor GTPase superfamily. Classic translation factor GTPase family. EF-G/EF-2 subfamily.

The protein localises to the cytoplasm. Catalyzes the GTP-dependent ribosomal translocation step during translation elongation. During this step, the ribosome changes from the pre-translocational (PRE) to the post-translocational (POST) state as the newly formed A-site-bound peptidyl-tRNA and P-site-bound deacylated tRNA move to the P and E sites, respectively. Catalyzes the coordinated movement of the two tRNA molecules, the mRNA and conformational changes in the ribosome. This Desulfitobacterium hafniense (strain Y51) protein is Elongation factor G.